A 284-amino-acid chain; its full sequence is Bifunctional protein FolD (284 aa).

NADP(+)-binding positions include 166–168 (GAS) and Ile232.

The protein belongs to the tetrahydrofolate dehydrogenase/cyclohydrolase family. In terms of assembly, homodimer.

It carries out the reaction (6R)-5,10-methylene-5,6,7,8-tetrahydrofolate + NADP(+) = (6R)-5,10-methenyltetrahydrofolate + NADPH. The catalysed reaction is (6R)-5,10-methenyltetrahydrofolate + H2O = (6R)-10-formyltetrahydrofolate + H(+). Its pathway is one-carbon metabolism; tetrahydrofolate interconversion. In terms of biological role, catalyzes the oxidation of 5,10-methylenetetrahydrofolate to 5,10-methenyltetrahydrofolate and then the hydrolysis of 5,10-methenyltetrahydrofolate to 10-formyltetrahydrofolate. The polypeptide is Bifunctional protein FolD (Shewanella frigidimarina (strain NCIMB 400)).